The primary structure comprises 245 residues: Sec-independent protein translocase protein TatC (245 aa).

The next 6 membrane-spanning stretches (helical) occupy residues 17-37 (FISVACIVVMFIVCFALRSYI), 73-93 (FFAAFIFSLPVIFWQFWKFVA), 107-127 (FVSFASIMFAFGACFCYFVVV), 159-179 (VVVAFGLAFEMPVIAFFFAKI), 191-207 (FRIAVLVIFVFSAFMTP), and 210-230 (VLSQFLMAGPLCGLYGLSILI).

This sequence belongs to the TatC family. The Tat system comprises two distinct complexes: a TatABC complex, containing multiple copies of TatA, TatB and TatC subunits, and a separate TatA complex, containing only TatA subunits. Substrates initially bind to the TatABC complex, which probably triggers association of the separate TatA complex to form the active translocon.

The protein resides in the cell inner membrane. Its function is as follows. Part of the twin-arginine translocation (Tat) system that transports large folded proteins containing a characteristic twin-arginine motif in their signal peptide across membranes. Together with TatB, TatC is part of a receptor directly interacting with Tat signal peptides. In Campylobacter jejuni subsp. jejuni serotype O:2 (strain ATCC 700819 / NCTC 11168), this protein is Sec-independent protein translocase protein TatC.